We begin with the raw amino-acid sequence, 384 residues long: Lipid-A-disaccharide synthase (384 aa).

Belongs to the LpxB family.

It catalyses the reaction a lipid X + a UDP-2-N,3-O-bis[(3R)-3-hydroxyacyl]-alpha-D-glucosamine = a lipid A disaccharide + UDP + H(+). It functions in the pathway bacterial outer membrane biogenesis; LPS lipid A biosynthesis. Condensation of UDP-2,3-diacylglucosamine and 2,3-diacylglucosamine-1-phosphate to form lipid A disaccharide, a precursor of lipid A, a phosphorylated glycolipid that anchors the lipopolysaccharide to the outer membrane of the cell. This chain is Lipid-A-disaccharide synthase (lpxB), found in Neisseria meningitidis serogroup B (strain ATCC BAA-335 / MC58).